The primary structure comprises 229 residues: Germin-like protein 12-2 (229 aa).

The signal sequence occupies residues 1 to 22; it reads MASSNFFLLTALIALVATQAMA. The cysteines at positions 32 and 47 are disulfide-linked. Residues 62 to 217 form the Cupin type-1 domain; the sequence is ANLDKPMDTT…AFQVDKKAVD (156 aa). A glycan (N-linked (GlcNAc...) asparagine) is linked at Asn-78. His-111, His-113, Glu-118, and His-162 together coordinate Mn(2+).

This sequence belongs to the germin family. Oligomer (believed to be a pentamer but probably hexamer).

The protein resides in the secreted. The protein localises to the extracellular space. Its subcellular location is the apoplast. Functionally, may play a role in plant defense. Probably has no oxalate oxidase activity even if the active site is conserved. The chain is Germin-like protein 12-2 from Oryza sativa subsp. japonica (Rice).